Here is a 236-residue protein sequence, read N- to C-terminus: Alpha-acetolactate decarboxylase (236 aa).

Belongs to the alpha-acetolactate decarboxylase family.

It carries out the reaction (2S)-2-acetolactate + H(+) = (R)-acetoin + CO2. It participates in polyol metabolism; (R,R)-butane-2,3-diol biosynthesis; (R,R)-butane-2,3-diol from pyruvate: step 2/3. Functionally, converts acetolactate into acetoin. The chain is Alpha-acetolactate decarboxylase (aldB) from Lactococcus lactis subsp. lactis (strain IL1403) (Streptococcus lactis).